The sequence spans 161 residues: ATP synthase subunit b (161 aa).

A helical transmembrane segment spans residues 11–31 (AISFVLFVWFCMKYIWPPIIL).

The protein belongs to the ATPase B chain family. F-type ATPases have 2 components, F(1) - the catalytic core - and F(0) - the membrane proton channel. F(1) has five subunits: alpha(3), beta(3), gamma(1), delta(1), epsilon(1). F(0) has three main subunits: a(1), b(2) and c(10-14). The alpha and beta chains form an alternating ring which encloses part of the gamma chain. F(1) is attached to F(0) by a central stalk formed by the gamma and epsilon chains, while a peripheral stalk is formed by the delta and b chains.

The protein resides in the cell membrane. F(1)F(0) ATP synthase produces ATP from ADP in the presence of a proton or sodium gradient. F-type ATPases consist of two structural domains, F(1) containing the extramembraneous catalytic core and F(0) containing the membrane proton channel, linked together by a central stalk and a peripheral stalk. During catalysis, ATP synthesis in the catalytic domain of F(1) is coupled via a rotary mechanism of the central stalk subunits to proton translocation. Functionally, component of the F(0) channel, it forms part of the peripheral stalk, linking F(1) to F(0). The sequence is that of ATP synthase subunit b from Buchnera aphidicola subsp. Acyrthosiphon pisum (strain APS) (Acyrthosiphon pisum symbiotic bacterium).